Consider the following 184-residue polypeptide: uncharacterized protein (184 aa).

This is an uncharacterized protein from Haemophilus influenzae (strain ATCC 51907 / DSM 11121 / KW20 / Rd).